A 215-amino-acid chain; its full sequence is Cytochrome b6 (215 aa).

The helical transmembrane segment at 32–52 threads the bilayer; the sequence is IFYCLGGITFTCFLVQVATGF. Heme c is bound at residue Cys-35. Residues His-86 and His-100 each contribute to the heme b site. A run of 3 helical transmembrane segments spans residues 90–110, 116–136, and 186–206; these read ASMM…TGGF, STWI…VTGY, and LHTF…FLMI. Heme b contacts are provided by His-187 and His-202.

Belongs to the cytochrome b family. PetB subfamily. As to quaternary structure, the 4 large subunits of the cytochrome b6-f complex are cytochrome b6, subunit IV (17 kDa polypeptide, PetD), cytochrome f and the Rieske protein, while the 4 small subunits are PetG, PetL, PetM and PetN. The complex functions as a dimer. Heme b serves as cofactor. Heme c is required as a cofactor.

The protein resides in the plastid. The protein localises to the chloroplast thylakoid membrane. Its function is as follows. Component of the cytochrome b6-f complex, which mediates electron transfer between photosystem II (PSII) and photosystem I (PSI), cyclic electron flow around PSI, and state transitions. This is Cytochrome b6 from Tetradesmus obliquus (Green alga).